A 141-amino-acid polypeptide reads, in one-letter code: Nucleoside diphosphate kinase (141 aa).

ATP is bound by residues K11, F59, R87, T93, R104, and N114. H117 functions as the Pros-phosphohistidine intermediate in the catalytic mechanism.

It belongs to the NDK family. As to quaternary structure, homotetramer. Mg(2+) is required as a cofactor.

It is found in the cytoplasm. It carries out the reaction a 2'-deoxyribonucleoside 5'-diphosphate + ATP = a 2'-deoxyribonucleoside 5'-triphosphate + ADP. It catalyses the reaction a ribonucleoside 5'-diphosphate + ATP = a ribonucleoside 5'-triphosphate + ADP. Its function is as follows. Major role in the synthesis of nucleoside triphosphates other than ATP. The ATP gamma phosphate is transferred to the NDP beta phosphate via a ping-pong mechanism, using a phosphorylated active-site intermediate. This Pseudomonas fluorescens (strain Pf0-1) protein is Nucleoside diphosphate kinase.